Here is a 142-residue protein sequence, read N- to C-terminus: MMSFVSLLLVGILFHATQAEQLTKCEVFQELKDLKDYGGVSLPEWVCTAFHTSGYDTQAIVQNNDSTEYGLFQINNKIWCKDDQNPHSRNICNISCDKFLDDDLTDDIMCVKKILDKVGINYWLAHKALCSEKLDQWLCEKL.

The signal sequence occupies residues 1-19 (MMSFVSLLLVGILFHATQA). The region spanning 20–142 (EQLTKCEVFQ…KLDQWLCEKL (123 aa)) is the C-type lysozyme domain. Cystine bridges form between cysteine 25/cysteine 139, cysteine 47/cysteine 130, cysteine 80/cysteine 96, and cysteine 92/cysteine 110. 2 N-linked (GlcNAc...) asparagine glycosylation sites follow: asparagine 64 and asparagine 93. The Ca(2+) site is built by lysine 98, aspartate 101, aspartate 103, aspartate 106, and aspartate 107.

The protein belongs to the glycosyl hydrolase 22 family. Lactose synthase (LS) is a heterodimer of a catalytic component, beta1,4-galactosyltransferase (beta4Gal-T1) and a regulatory component, alpha-lactalbumin (LA). In terms of tissue distribution, mammary gland specific. Secreted in milk.

The protein resides in the secreted. Functionally, regulatory subunit of lactose synthase, changes the substrate specificity of galactosyltransferase in the mammary gland making glucose a good acceptor substrate for this enzyme. This enables LS to synthesize lactose, the major carbohydrate component of milk. In other tissues, galactosyltransferase transfers galactose onto the N-acetylglucosamine of the oligosaccharide chains in glycoproteins. This chain is Alpha-lactalbumin (LALBA), found in Ovis aries (Sheep).